The sequence spans 221 residues: PKHD-type hydroxylase PMT9312_1262 (221 aa).

Residues 80–174 enclose the Fe2OG dioxygenase domain; that stretch reads IIHGIMFTKS…RLVCVGWIES (95 aa). 3 residues coordinate Fe cation: His98, Asp100, and His155. Arg165 lines the 2-oxoglutarate pocket.

Fe(2+) is required as a cofactor. The cofactor is L-ascorbate.

The protein is PKHD-type hydroxylase PMT9312_1262 of Prochlorococcus marinus (strain MIT 9312).